Consider the following 260-residue polypeptide: ATP synthase subunit a (260 aa).

A propeptide spans 1-11 (MQNTLLRTYIN) (removed in mature form). 6 helical membrane-spanning segments follow: residues 37–57 (ITTF…LYVL), 96–116 (YFPF…ISMI), 126–146 (FVFI…LSLF), 152–172 (FFSL…LVVI), 192–212 (IFSG…FVQI), and 217–237 (LILG…EFGI).

This sequence belongs to the ATPase A chain family. F-type ATPases have 2 components, CF(1) - the catalytic core - and CF(0) - the membrane proton channel. CF(1) has five subunits: alpha(3), beta(3), gamma(1), delta(1), epsilon(1). CF(0) has three main subunits: a, b and c.

It is found in the mitochondrion inner membrane. Its function is as follows. Mitochondrial membrane ATP synthase (F(1)F(0) ATP synthase or Complex V) produces ATP from ADP in the presence of a proton gradient across the membrane which is generated by electron transport complexes of the respiratory chain. F-type ATPases consist of two structural domains, F(1) - containing the extramembraneous catalytic core and F(0) - containing the membrane proton channel, linked together by a central stalk and a peripheral stalk. During catalysis, ATP synthesis in the catalytic domain of F(1) is coupled via a rotary mechanism of the central stalk subunits to proton translocation. Key component of the proton channel; it may play a direct role in the translocation of protons across the membrane. The sequence is that of ATP synthase subunit a (ATP6) from Candida glabrata (strain ATCC 2001 / BCRC 20586 / JCM 3761 / NBRC 0622 / NRRL Y-65 / CBS 138) (Yeast).